The primary structure comprises 322 residues: Probable heme-iron transport system permease protein IsdF (322 aa).

Transmembrane regions (helical) follow at residues 9 to 29 (LLFLCLLVILIATAYISFVTG), 61 to 81 (ILIALMVGAMLAVSGALLQAA), 89 to 109 (ANIIGVSSGALIMRALCMLFI), 114 to 134 (FYLPLLSFIGGLIPFLIIILL), 143 to 163 (VSMILVGVALFVLLNGVLEIL), 179 to 199 (IWSDVYILAVSALLGLILTLL), 233 to 253 (VFLASATVAIVGQLAFLGIIV), 267 to 287 (VLIPFSTVIGAWLLLVADLLG), and 294 to 314 (LEIPANAILMIVGGPMLIYLI).

This sequence belongs to the binding-protein-dependent transport system permease family. FecCD subfamily.

It is found in the cell membrane. Functionally, part of the binding-protein-dependent transport system for heme-iron. Responsible for the translocation of the substrate across the membrane. This chain is Probable heme-iron transport system permease protein IsdF (isdF), found in Staphylococcus aureus (strain Mu3 / ATCC 700698).